Reading from the N-terminus, the 400-residue chain is Lipase member N (400 aa).

The signal sequence occupies residues 1–19; that stretch reads MPMMWLFLTTACLIPGTLS. The 301-residue stretch at 81 to 381 folds into the AB hydrolase-1 domain; sequence PVVYMQHALF…DWNHFDFVWG (301 aa). The Nucleophile role is filled by serine 175. An intrachain disulfide couples cysteine 249 to cysteine 258. The N-linked (GlcNAc...) asparagine glycan is linked to asparagine 274. Residues aspartate 346 and histidine 375 each act as charge relay system in the active site.

This sequence belongs to the AB hydrolase superfamily. Lipase family. In terms of tissue distribution, highly expressed in the epidermis. Also detected in other tissues, although at much lower levels, including liver and kidney.

The protein localises to the secreted. The catalysed reaction is a sterol ester + H2O = a sterol + a fatty acid + H(+). The enzyme catalyses a triacylglycerol + H2O = a 1,2-diacylglycerol + a fatty acid + H(+). It carries out the reaction a triacylglycerol + H2O = a diacylglycerol + a fatty acid + H(+). It catalyses the reaction a cholesterol ester + H2O = cholesterol + a fatty acid + H(+). In terms of biological role, plays a highly specific role in the last step of keratinocyte differentiation. Contains two distinct domains: the alpha/beta hydrolase fold and the abhydrolase-associated lipase region, also features the consensus sequence of the active site of a genuine lipase. May have an essential function in lipid metabolism of the most differentiated epidermal layers. In Mus musculus (Mouse), this protein is Lipase member N (Lipn).